Reading from the N-terminus, the 558-residue chain is MEEGHKEPLVLRVEGSHCSLSEMDDFDLTRALEKPRQLKIERKRSFDERSMSELSTGYVRQDSILEMAHSPGSRSMVDTPLSVRNSFEPHPMVAEAWEALRRSMVFFRGQPVGTIAAYDHASEEVLNYDQVFVRDFVPSALAFLMNGEPDIVKNFLLKTLQLQGWEKRVDRFKLGEGVMPASFKVLHDPVRKTDTIIADFGESAIGRVAPVDSGFWWIILLRAYTKSTGDLTLSETPECQRGMRLILSLCLSEGFDTFPTLLCADGCSMVDRRMGVYGYPIEIQALFFMALRCALSMLKPDEEGRDFIERIVKRLHALSFHMRSYFWLDFQQLNDIYRYKTEEYSHTAVNKFNVMPDSIPDWVFDFMPLRGGYFVGNVSPARMDFRWFSLGNCVSILSSLATPDQSMAIMDLLEHRWEELVGEMPLKICYPCIESHEWRIVTGCDPKNTRWSYHNGGSWPVLLWTLTAACIKTGRPQIARRAIDLIESRLHRDCWPEYYDGKQGRYVGKQARKYQTWSIAGYLVAKMMLEDPSHIGMISLEEDKQMKPVIKRSASWTC.

Residues Ser16, Ser19, and Ser50 each carry the phosphoserine modification. Residue Thr79 is modified to Phosphothreonine. A Phosphoserine modification is found at Ser555.

The protein belongs to the glycosyl hydrolase 100 family.

Its subcellular location is the cytoplasm. The protein localises to the cytosol. The enzyme catalyses Hydrolysis of terminal non-reducing beta-D-fructofuranoside residues in beta-D-fructofuranosides.. Cytosolic invertase that may cleave sucrose into glucose and fructose, and that is involved in the regulation of root growth. May regulate sugar-mediated root development by controlling sucrose catabolism in root cells. In Arabidopsis thaliana (Mouse-ear cress), this protein is Alkaline/neutral invertase CINV2.